We begin with the raw amino-acid sequence, 494 residues long: UDP-glucose 6-dehydrogenase (494 aa).

NAD(+) is bound by residues 11–16 (GAGYVG), D36, R41, and 89–93 (VNTPT). Residues 88-110 (SVNTPTKTYGMGKGRAADLKYIE) are disordered. K107 is modified (N6-acetyllysine). Residues 129–135 (KSTVPVR) are allosteric switch region. 130–132 (STV) contributes to the NAD(+) binding site. The active-site Proton donor/acceptor is the E161. Residues 161–165 (EFLAE), 220–224 (KLAAN), R260, and 267–273 (KASVGFG) each bind substrate. E165 contributes to the NAD(+) binding site. Residue K220 is the Proton donor/acceptor of the active site. C276 functions as the Nucleophile in the catalytic mechanism. An NAD(+)-binding site is contributed by 276–279 (CFQK). Positions 321 to 325 (SLFNT) are important for formation of active hexamer structure. Position 338–339 (338–339 (FK)) interacts with substrate. An NAD(+)-binding site is contributed by R346. R442 is a binding site for substrate. The interval 466–494 (VSSKRIPYAPSGEIPKFSLQDPPNKKPKV) is disordered. The residue at position 476 (S476) is a Phosphoserine.

The protein belongs to the UDP-glucose/GDP-mannose dehydrogenase family. As to quaternary structure, homohexamer.

It carries out the reaction UDP-alpha-D-glucose + 2 NAD(+) + H2O = UDP-alpha-D-glucuronate + 2 NADH + 3 H(+). The protein operates within nucleotide-sugar biosynthesis; UDP-alpha-D-glucuronate biosynthesis; UDP-alpha-D-glucuronate from UDP-alpha-D-glucose: step 1/1. With respect to regulation, UDP-alpha-D-xylose (UDX) acts as a feedback inhibitor. It binds at the same site as the substrate, but functions as allosteric inhibitor by triggering a conformation change that disrupts the active hexameric ring structure and gives rise to an inactive, horseshoe-shaped hexamer. Its function is as follows. Catalyzes the formation of UDP-alpha-D-glucuronate, a constituent of complex glycosaminoglycans. Required for the biosynthesis of chondroitin sulfate and heparan sulfate. Required for embryonic development via its role in the biosynthesis of glycosaminoglycans. Required for proper brain and neuronal development. The polypeptide is UDP-glucose 6-dehydrogenase (UGDH) (Pongo abelii (Sumatran orangutan)).